The chain runs to 805 residues: Leucine--tRNA ligase (805 aa).

The 'HIGH' region motif lies at 40–51 (PYPSGSGLHVGH). A 'KMSKS' region motif is present at residues 576–580 (KMSKS). Lysine 579 provides a ligand contact to ATP.

It belongs to the class-I aminoacyl-tRNA synthetase family.

The protein localises to the cytoplasm. It carries out the reaction tRNA(Leu) + L-leucine + ATP = L-leucyl-tRNA(Leu) + AMP + diphosphate. The chain is Leucine--tRNA ligase from Chlorobium chlorochromatii (strain CaD3).